Here is a 211-residue protein sequence, read N- to C-terminus: Ribosomal RNA small subunit methyltransferase G (211 aa).

Residues Gly-78, Met-83, 129-130 (AE), and Arg-144 each bind S-adenosyl-L-methionine.

The protein belongs to the methyltransferase superfamily. RNA methyltransferase RsmG family.

It localises to the cytoplasm. It carries out the reaction guanosine(527) in 16S rRNA + S-adenosyl-L-methionine = N(7)-methylguanosine(527) in 16S rRNA + S-adenosyl-L-homocysteine. Its function is as follows. Specifically methylates the N7 position of guanine in position 527 of 16S rRNA. The protein is Ribosomal RNA small subunit methyltransferase G of Pseudomonas syringae pv. tomato (strain ATCC BAA-871 / DC3000).